Reading from the N-terminus, the 876-residue chain is Leucine--tRNA ligase (876 aa).

The 'HIGH' region signature appears at 42 to 52; it reads PYPSGKLHMGH. A 'KMSKS' region motif is present at residues 634–638; the sequence is KMSKS. Lysine 637 provides a ligand contact to ATP.

It belongs to the class-I aminoacyl-tRNA synthetase family.

The protein localises to the cytoplasm. The catalysed reaction is tRNA(Leu) + L-leucine + ATP = L-leucyl-tRNA(Leu) + AMP + diphosphate. This Neisseria meningitidis serogroup C (strain 053442) protein is Leucine--tRNA ligase.